Here is a 549-residue protein sequence, read N- to C-terminus: Urocanate hydratase (549 aa).

Residues 46 to 47, Q124, 170 to 172, E190, R195, 236 to 237, 257 to 261, 267 to 268, and Y316 each bind NAD(+); these read GG, GMG, NA, QTSAH, and YV. C404 is an active-site residue. G486 contacts NAD(+).

This sequence belongs to the urocanase family. NAD(+) serves as cofactor.

The protein resides in the cytoplasm. It catalyses the reaction 4-imidazolone-5-propanoate = trans-urocanate + H2O. It functions in the pathway amino-acid degradation; L-histidine degradation into L-glutamate; N-formimidoyl-L-glutamate from L-histidine: step 2/3. Catalyzes the conversion of urocanate to 4-imidazolone-5-propionate. The polypeptide is Urocanate hydratase (Caldanaerobacter subterraneus subsp. tengcongensis (strain DSM 15242 / JCM 11007 / NBRC 100824 / MB4) (Thermoanaerobacter tengcongensis)).